The sequence spans 555 residues: MHLVRWLICLIQLWIQLGAAGSVTLLDPLLIEIPNGKLRGRDNGHYYSYEAIPYAEPPTGELRFEVPKPYKQQWTNTFDATQPPVLCMQWNQFINGTNKLLGVEDCLTVSVYRPKNSSRNNFPVVANLHGGAFMFGGPSQYGHENIMREGSVILVTIGYRLGPLGFVSTGDADLSGNFGLKDQRLALLWIKQNIASFGGEPENILVVGHSAGGASVHLQMLREDFSKVAKAAISFSGNALDPWVIQQGLRGRTFELGRIVGCGQASDSVTLKKCLKSKPASEIVSAVQSFLVFSYVPFTPFGPAIESPDAPEAFITQHPIDIIKSGKFAQVPWAVTYTTEDGGYNAALLLEKQASSGRELILDLNDRWFDWAPYLLFYRDSMTTIKDMDDYSRKLRQEYLGDRRFSVESYWDVQRMFTDLLFKNSVTVSVDLHRKYGKSPVYAFVYDNPAEVGVGQILSGRNDVYFGTVHGDDVFLIFNVSFVPANRRPDEQIISRNFIKMLEYFALSTNDTMAYGDCVFQNNVGSKHMQLLSITRDGCENKQLNCFIQRCLIFF.

A signal peptide spans 1–19 (MHLVRWLICLIQLWIQLGA). A disulfide bridge links Cys-87 with Cys-106. Residues Asn-95 and Asn-116 are each glycosylated (N-linked (GlcNAc...) asparagine). Ser-210 (acyl-ester intermediate) is an active-site residue. A disulfide bond links Cys-262 and Cys-274. N-linked (GlcNAc...) asparagine glycans are attached at residues Asn-479 and Asn-510. Cysteines 518 and 539 form a disulfide.

The protein belongs to the type-B carboxylesterase/lipase family.

The protein localises to the secreted. The catalysed reaction is a carboxylic ester + H2O = an alcohol + a carboxylate + H(+). This is Esterase-5A (Est-5A) from Drosophila miranda (Fruit fly).